The following is a 154-amino-acid chain: Dau c 1 isoallergen Dau c 1.0301 (154 aa).

Belongs to the BetVI family. In terms of tissue distribution, expressed in roots.

This is Dau c 1 isoallergen Dau c 1.0301 from Daucus carota (Wild carrot).